We begin with the raw amino-acid sequence, 272 residues long: NADPH-dependent 7-cyano-7-deazaguanine reductase (272 aa).

80–82 (VES) lines the substrate pocket. 82 to 83 (SK) contacts NADPH. The active-site Thioimide intermediate is the Cys-178. Catalysis depends on Asp-185, which acts as the Proton donor. A substrate-binding site is contributed by 217-218 (AE). An NADPH-binding site is contributed by 246 to 247 (RG).

It belongs to the GTP cyclohydrolase I family. QueF type 2 subfamily. As to quaternary structure, homodimer.

The protein localises to the cytoplasm. It catalyses the reaction 7-aminomethyl-7-carbaguanine + 2 NADP(+) = 7-cyano-7-deazaguanine + 2 NADPH + 3 H(+). It participates in tRNA modification; tRNA-queuosine biosynthesis. Its function is as follows. Catalyzes the NADPH-dependent reduction of 7-cyano-7-deazaguanine (preQ0) to 7-aminomethyl-7-deazaguanine (preQ1). The protein is NADPH-dependent 7-cyano-7-deazaguanine reductase of Rickettsia typhi (strain ATCC VR-144 / Wilmington).